The following is a 577-amino-acid chain: Cytochrome P450 714D1 (577 aa).

Residues 1–3 (MES) are Lumenal-facing. Residues 4–24 (FFVFFTAAALPVVVAAAVIAG) form a helical; Signal-anchor for type III membrane protein membrane-spanning segment. Residues 25 to 577 (LCITAAWLAR…STAPVHSSHN (553 aa)) are Cytoplasmic-facing. Residues 315 to 343 (REHGGKAAPPSPPERDFLGSIIENSGGQP) form a disordered region. Cys-504 is a binding site for heme.

Belongs to the cytochrome P450 family. Heme is required as a cofactor. As to expression, expressed in rapidly elongating or dividing tissues, including the shoot apical meristem, the intercalary meristem and elongating zones of internodes, and panicle but not in young seedlings, roots and leaves. During the heading stage, the highest expression is detected in the flowering spikelets, anthers, the divisional zone and the node of the uppermost internode.

It localises to the endoplasmic reticulum membrane. Its function is as follows. Catalyzes the 16alpha,17-epoxidation on non-13-hydroxylated gibberellins (GAs), including GA4, GA9, and GA12. No activity with GA1, GA20, GA53 or ent-kaurenoic acid. Reduces the biological activity of GAs. The protein is Cytochrome P450 714D1 (CYP714D1) of Oryza sativa subsp. japonica (Rice).